A 406-amino-acid polypeptide reads, in one-letter code: Indole-3-pyruvate monooxygenase YUCCA1 (406 aa).

21–26 serves as a coordination point for FAD; that stretch reads GAGPSG. 184–189 provides a ligand contact to NADP(+); the sequence is GCGNSG.

The protein belongs to the FMO family. FAD serves as cofactor. As to expression, expressed in coleoptile tips, root tips, leaf blade tips, shoot apical meristem, vasculature of stems and flowers.

The enzyme catalyses indole-3-pyruvate + NADPH + O2 + H(+) = (indol-3-yl)acetate + CO2 + NADP(+) + H2O. In terms of biological role, involved in auxin biosynthesis. Converts the indole-3-pyruvic acid (IPA) produced by the TAA family to indole-3-acetic acid (IAA). Functions downstream of TAR2 in auxin biosynthesis. Functions upstream of WOX11, a transcription factor that promotes the development of crown roots. The sequence is that of Indole-3-pyruvate monooxygenase YUCCA1 from Oryza sativa subsp. japonica (Rice).